The sequence spans 248 residues: Probable transcriptional regulatory protein Oant_1200 (248 aa).

The protein belongs to the TACO1 family.

The protein resides in the cytoplasm. The protein is Probable transcriptional regulatory protein Oant_1200 of Brucella anthropi (strain ATCC 49188 / DSM 6882 / CCUG 24695 / JCM 21032 / LMG 3331 / NBRC 15819 / NCTC 12168 / Alc 37) (Ochrobactrum anthropi).